Reading from the N-terminus, the 67-residue chain is MSMSYSLLIHKTRKWGHKFFKFIFKSYIGSTMKSLINKVKRYSFYEKNLVIISNLSRKNVYGVIFND.

This is an uncharacterized protein from Acidianus filamentous virus 2 (isolate Italy/Pozzuoli) (AFV-2).